The following is an 82-amino-acid chain: Protein Vpu (82 aa).

The Extracellular portion of the chain corresponds to 1 to 7 (MQPIPIV). The chain crosses the membrane as a helical span at residues 8–28 (AIVALVVAIIIAIVVWSIVII). The Cytoplasmic segment spans residues 29 to 82 (EYRKILRQRKIDRLIDRLIERAEDSGNESEGEISALVEMGVEMGHHAPWDVDDL). 2 positions are modified to phosphoserine; by host CK2: serine 53 and serine 57.

The protein belongs to the HIV-1 VPU protein family. Homopentamer. Interacts with host CD4 and BRTC; these interactions induce proteasomal degradation of CD4. Interacts (via transmembrane region) with host BST2 (via transmembrane region); this interaction leads to the degradation of host BST2. Interacts with host FBXW11. Interacts with host AP1M1; this interaction plays a role in the mistrafficking and subsequent degradation of host BST2. Interacts with host RANBP2; this interaction allows Vpu to down-regulate host BLM sumoylation. Post-translationally, phosphorylated by host CK2. This phosphorylation is necessary for interaction with human BTRC and degradation of CD4.

Its subcellular location is the host membrane. Ion channel activity is inhibited by hexamethylene amiloride in vitro. Its function is as follows. Enhances virion budding by targeting host CD4 and Tetherin/BST2 to proteasome degradation. Degradation of CD4 prevents any unwanted premature interactions between viral Env and its host receptor CD4 in the endoplasmic reticulum. Degradation of antiretroviral protein Tetherin/BST2 is important for virion budding, as BST2 tethers new viral particles to the host cell membrane. Mechanistically, Vpu bridges either CD4 or BST2 to BTRC, a substrate recognition subunit of the Skp1/Cullin/F-box protein E3 ubiquitin ligase, induces their ubiquitination and subsequent proteasomal degradation. The alteration of the E3 ligase specificity by Vpu seems to promote the degradation of host IKBKB, leading to NF-kappa-B down-regulation and subsequent apoptosis. Acts as a viroporin that forms an oligomeric ion channel in membranes. Modulates the host DNA repair mechanisms to promote degradation of nuclear viral cDNA in cells that are already productively infected in order to suppress immune sensing and proviral hyper-integration (superinfection). Manipulates PML-NBs and modulates SUMOylation of host BLM protein thereby enhancing its DNA-end processing activity toward viral unintegrated linear DNA. Also inhibits RAD52-mediated homologous repair of viral cDNA, preventing the generation of dead-end circular forms of single copies of the long terminal repeat and permitting sustained nucleolytic attack. The sequence is that of Protein Vpu from Human immunodeficiency virus type 1 group M subtype B (isolate HXB2) (HIV-1).